Reading from the N-terminus, the 245-residue chain is Ribonuclease 3 (245 aa).

Residues 18–146 (LSEFLENLSI…FVGAIYLDSG (129 aa)) form the RNase III domain. Glutamate 59 provides a ligand contact to Mg(2+). Aspartate 63 is an active-site residue. The Mg(2+) site is built by aspartate 132 and glutamate 135. Residue glutamate 135 is part of the active site. One can recognise a DRBM domain in the interval 173–242 (DYKSLLQEYV…AEVALKAMED (70 aa)).

It belongs to the ribonuclease III family. As to quaternary structure, homodimer. It depends on Mg(2+) as a cofactor.

It is found in the cytoplasm. The catalysed reaction is Endonucleolytic cleavage to 5'-phosphomonoester.. Digests double-stranded RNA. Involved in the processing of primary rRNA transcript to yield the immediate precursors to the large and small rRNAs (23S and 16S). Processes some mRNAs, and tRNAs when they are encoded in the rRNA operon. Processes pre-crRNA and tracrRNA of type II CRISPR loci if present in the organism. This is Ribonuclease 3 from Borreliella afzelii (strain PKo) (Borrelia afzelii).